Reading from the N-terminus, the 730-residue chain is Cyclin-dependent kinase 12 (730 aa).

2 disordered regions span residues 1 to 230 and 246 to 283; these read MEIS…APFS and FSLS…IATR. Residues 9–21 show a composition bias toward basic and acidic residues; that stretch reads THERDRKGSYGHR. The segment covering 57–67 has biased composition (polar residues); the sequence is SISPQYKQRNW. Residues 75-94 show a composition bias toward basic and acidic residues; it reads GRDRGRNDFSYRKKGKDYNK. Composition is skewed to basic residues over residues 95-122 and 151-163; these read RRDK…KRRN and KSKK…RKHS. A compositionally biased stretch (low complexity) spans 194–203; the sequence is FNINPFQPMF. Pro residues predominate over residues 204–230; it reads SQPPPPPLPPNSQFMTPPPRPPPAPFS. The Protein kinase domain maps to 313–605; the sequence is MLDQIGEGTY…AKEALNHPWI (293 aa). Residues 317-325, Lys340, and 398-403 each bind ATP; these read IGEGTYGQV and EYVDHD. Catalysis depends on Asp444, which acts as the Proton acceptor. The disordered stretch occupies residues 623 to 730; sequence DCHEMWSKKQ…QSQYQSVFFK (108 aa). His625 is a binding site for ATP. The span at 676–688 shows a compositional bias: basic residues; that stretch reads NHHHHHHHSHHHA. Positions 714-730 are enriched in polar residues; sequence NNHQPVPQSQYQSVFFK.

The protein belongs to the protein kinase superfamily. CMGC Ser/Thr protein kinase family. CDC2/CDKX subfamily.

The protein resides in the nucleus. It catalyses the reaction [DNA-directed RNA polymerase] + ATP = phospho-[DNA-directed RNA polymerase] + ADP + H(+). It carries out the reaction L-seryl-[protein] + ATP = O-phospho-L-seryl-[protein] + ADP + H(+). The catalysed reaction is L-threonyl-[protein] + ATP = O-phospho-L-threonyl-[protein] + ADP + H(+). Its function is as follows. Cyclin-dependent kinase which displays CTD kinase activity: hyperphosphorylates 'Ser-2' in the C-terminal heptapeptide repeat domain (CTD) of the largest RNA polymerase II subunit, thereby acting as a key regulator of transcription elongation. Required for normal reproduction. The protein is Cyclin-dependent kinase 12 of Caenorhabditis elegans.